We begin with the raw amino-acid sequence, 399 residues long: Tryptophan synthase beta chain (399 aa).

Residue Lys91 is modified to N6-(pyridoxal phosphate)lysine.

This sequence belongs to the TrpB family. Tetramer of two alpha and two beta chains. The cofactor is pyridoxal 5'-phosphate.

It catalyses the reaction (1S,2R)-1-C-(indol-3-yl)glycerol 3-phosphate + L-serine = D-glyceraldehyde 3-phosphate + L-tryptophan + H2O. The protein operates within amino-acid biosynthesis; L-tryptophan biosynthesis; L-tryptophan from chorismate: step 5/5. Functionally, the beta subunit is responsible for the synthesis of L-tryptophan from indole and L-serine. The chain is Tryptophan synthase beta chain from Shouchella clausii (strain KSM-K16) (Alkalihalobacillus clausii).